The chain runs to 671 residues: UvrABC system protein B (671 aa).

One can recognise a Helicase ATP-binding domain in the interval 25 to 178; it reads EGIKKGYKHQ…DAMLKKLVEI (154 aa). 38 to 45 provides a ligand contact to ATP; sequence GVTGSGKT. The Beta-hairpin motif lies at 91–114; sequence YYDYYQPEAYIPETDTYIEKDALI. The region spanning 435–601 is the Helicase C-terminal domain; that stretch reads QVEDLLEEIH…TVKSKIKDIL (167 aa). Residues 626–661 enclose the UVR domain; sequence EETIKKLEQEMKHAAENLEFEKAAEIRDKIFKIKEK.

It belongs to the UvrB family. As to quaternary structure, forms a heterotetramer with UvrA during the search for lesions. Interacts with UvrC in an incision complex.

Its subcellular location is the cytoplasm. The UvrABC repair system catalyzes the recognition and processing of DNA lesions. A damage recognition complex composed of 2 UvrA and 2 UvrB subunits scans DNA for abnormalities. Upon binding of the UvrA(2)B(2) complex to a putative damaged site, the DNA wraps around one UvrB monomer. DNA wrap is dependent on ATP binding by UvrB and probably causes local melting of the DNA helix, facilitating insertion of UvrB beta-hairpin between the DNA strands. Then UvrB probes one DNA strand for the presence of a lesion. If a lesion is found the UvrA subunits dissociate and the UvrB-DNA preincision complex is formed. This complex is subsequently bound by UvrC and the second UvrB is released. If no lesion is found, the DNA wraps around the other UvrB subunit that will check the other stand for damage. This is UvrABC system protein B from Thermodesulfovibrio yellowstonii (strain ATCC 51303 / DSM 11347 / YP87).